Consider the following 212-residue polypeptide: Octanoyltransferase (212 aa).

The 179-residue stretch at 31-209 (AETQDEIWLV…HFANLLGYNI (179 aa)) folds into the BPL/LPL catalytic domain. Substrate-binding positions include 70 to 77 (RGGQITYH), 138 to 140 (SLG), and 151 to 153 (GLA). Cys169 acts as the Acyl-thioester intermediate in catalysis.

It belongs to the LipB family.

The protein resides in the cytoplasm. The catalysed reaction is octanoyl-[ACP] + L-lysyl-[protein] = N(6)-octanoyl-L-lysyl-[protein] + holo-[ACP] + H(+). It participates in protein modification; protein lipoylation via endogenous pathway; protein N(6)-(lipoyl)lysine from octanoyl-[acyl-carrier-protein]: step 1/2. Catalyzes the transfer of endogenously produced octanoic acid from octanoyl-acyl-carrier-protein onto the lipoyl domains of lipoate-dependent enzymes. Lipoyl-ACP can also act as a substrate although octanoyl-ACP is likely to be the physiological substrate. This chain is Octanoyltransferase, found in Haemophilus influenzae (strain ATCC 51907 / DSM 11121 / KW20 / Rd).